The following is a 244-amino-acid chain: ATP synthase subunit b 2 (244 aa).

A helical membrane pass occupies residues 2–22; that stretch reads LIDWFTIVAQIINFLILVFLL.

Belongs to the ATPase B chain family. In terms of assembly, F-type ATPases have 2 components, F(1) - the catalytic core - and F(0) - the membrane proton channel. F(1) has five subunits: alpha(3), beta(3), gamma(1), delta(1), epsilon(1). F(0) has four main subunits: a(1), b(1), b'(1) and c(10-14). The alpha and beta chains form an alternating ring which encloses part of the gamma chain. F(1) is attached to F(0) by a central stalk formed by the gamma and epsilon chains, while a peripheral stalk is formed by the delta, b and b' chains.

The protein resides in the cellular thylakoid membrane. F(1)F(0) ATP synthase produces ATP from ADP in the presence of a proton or sodium gradient. F-type ATPases consist of two structural domains, F(1) containing the extramembraneous catalytic core and F(0) containing the membrane proton channel, linked together by a central stalk and a peripheral stalk. During catalysis, ATP synthesis in the catalytic domain of F(1) is coupled via a rotary mechanism of the central stalk subunits to proton translocation. In terms of biological role, component of the F(0) channel, it forms part of the peripheral stalk, linking F(1) to F(0). The polypeptide is ATP synthase subunit b 2 (Crocosphaera subtropica (strain ATCC 51142 / BH68) (Cyanothece sp. (strain ATCC 51142))).